The sequence spans 196 residues: Probable GTP-binding protein EngB (196 aa).

An EngB-type G domain is found at 22–194 (DKKEIAFAGR…LKTIGEILGD (173 aa)). Residues 30-37 (GRSNVGKS), 56-60 (GKTRS), 74-77 (DLPG), 141-144 (TKSD), and 173-175 (FSS) each bind GTP. Mg(2+)-binding residues include serine 37 and threonine 58.

It belongs to the TRAFAC class TrmE-Era-EngA-EngB-Septin-like GTPase superfamily. EngB GTPase family. Mg(2+) serves as cofactor.

Functionally, necessary for normal cell division and for the maintenance of normal septation. This chain is Probable GTP-binding protein EngB, found in Petrotoga mobilis (strain DSM 10674 / SJ95).